The following is a 911-amino-acid chain: Ribonuclease J (911 aa).

A chloroplast-targeting transit peptide spans 1–70 (MMKPASLQGF…VTSAPASGTS (70 aa)). Positions 58 to 90 (SCSVTSAPASGTSSSSKTPRRRSGRLEGVGKSM) are disordered. Positions 63-74 (SAPASGTSSSSK) are enriched in low complexity. Zn(2+)-binding residues include H175, H177, D179, H180, H245, and D267. Residues 336–338 (ASN) and 468–472 (HTSGH) each bind substrate. H494 contributes to the Zn(2+) binding site. 2 disordered regions span residues 695–723 (VEGN…TLED) and 735–824 (EETA…WKPE). Basic and acidic residues-rich tracts occupy residues 713–722 (SPKEVDRTLE) and 783–795 (ADTE…KENS). The span at 796 to 806 (RDDDELADASD) shows a compositional bias: acidic residues. The region spanning 813–877 (PKRVRKNKWK…QCKSLWASLI (65 aa)) is the Myb-like domain.

Belongs to the metallo-beta-lactamase superfamily. RNA-metabolizing metallo-beta-lactamase-like family. Bacterial RNase J subfamily. Homodimer. May be a subunit of the RNA degradosome. The cofactor is Zn(2+). Moslty expressed in inflorescences, seedlings, leaves, flowers and flower buds, and, to a lower extent, in stems, siliques and roots.

Its subcellular location is the plastid. The protein resides in the chloroplast. In terms of biological role, essential protein required during embryogenesis, especially in initiating and maintaining the organization of shoot apical meristems (SAMs), cotyledons, and hypocotyls. Involved in auxin-mediated pathways during embryogenesis. RNase that has both endonuclease and 5'-3' exonuclease activities. Involved in RNA surveillance to prevent overaccumulation of antisense RNA. Probably involved in maturation of rRNA and in some organisms also mRNA maturation and/or decay. The polypeptide is Ribonuclease J (Arabidopsis thaliana (Mouse-ear cress)).